Consider the following 241-residue polypeptide: Uridylate kinase (241 aa).

An ATP-binding site is contributed by 15 to 18 (KLSG). The involved in allosteric activation by GTP stretch occupies residues 23 to 28 (GTEGFG). Residue G57 coordinates UMP. ATP-binding residues include G58 and R62. UMP is bound by residues D77 and 138-145 (TGNPFFTT). T165, F171, and D174 together coordinate ATP.

Belongs to the UMP kinase family. Homohexamer.

It is found in the cytoplasm. The enzyme catalyses UMP + ATP = UDP + ADP. Its pathway is pyrimidine metabolism; CTP biosynthesis via de novo pathway; UDP from UMP (UMPK route): step 1/1. With respect to regulation, allosterically activated by GTP. Inhibited by UTP. In terms of biological role, catalyzes the reversible phosphorylation of UMP to UDP. The chain is Uridylate kinase from Escherichia coli O139:H28 (strain E24377A / ETEC).